A 102-amino-acid chain; its full sequence is Caroteno-chlorophyll a-c-binding protein (102 aa).

Residues glutamate 36 and histidine 39 each coordinate chlorophyll a. Residues 78 to 98 traverse the membrane as a helical segment; sequence VLGLIKIVPAGLWGIMIFYAA.

The protein belongs to the light-harvesting chlorophyll a/b-binding (LHC) protein family. As to quaternary structure, the LHC complex consists of chlorophyll a-b binding proteins. Binds at least 14 chlorophylls (8 Chl-a and 6 Chl-b) and carotenoids such as lutein and neoxanthin. serves as cofactor. Post-translationally, photoregulated by reversible phosphorylation of its threonine residues.

It is found in the plastid. The protein resides in the chloroplast thylakoid membrane. Its function is as follows. The light-harvesting complex (LHC) functions as a light receptor, it captures and delivers excitation energy to photosystems with which it is closely associated. The sequence is that of Caroteno-chlorophyll a-c-binding protein from Amphidinium carterae (Dinoflagellate).